The chain runs to 131 residues: Large ribosomal subunit protein bL12c (131 aa).

Residues 106–125 (KDNTNKENSEEIKQQLEEAG) show a composition bias toward basic and acidic residues. Residues 106–131 (KDNTNKENSEEIKQQLEEAGAKVSIK) form a disordered region.

The protein belongs to the bacterial ribosomal protein bL12 family. In terms of assembly, homodimer. Part of the ribosomal stalk of the 50S ribosomal subunit. Forms a multimeric L10(L12)X complex, where L10 forms an elongated spine to which 2 to 4 L12 dimers bind in a sequential fashion. Binds GTP-bound translation factors.

The protein resides in the plastid. The protein localises to the chloroplast. Its function is as follows. Forms part of the ribosomal stalk which helps the ribosome interact with GTP-bound translation factors. Is thus essential for accurate translation. This is Large ribosomal subunit protein bL12c from Gracilaria tenuistipitata var. liui (Red alga).